Consider the following 327-residue polypeptide: Cyclic AMP-responsive element-binding protein 1 (327 aa).

2 disordered regions span residues 1 to 26 and 94 to 113; these read MTME…QQMT and SEDS…RREI. One can recognise a KID domain in the interval 87–146; the sequence is QISTIAESEDSQESVDSVTDSQKRREILSRRPSYRKILNDLSSDAPGVPRIEEEKSEEET. Ser-119 bears the Phosphoserine; by CaMK1, CaMK2, CaMK4, PKB/AKT1 or PKB/AKT2, RPS6KA3, RPS6KA4, RPS6KA5, SGK1 and TSSK4 mark. Lys-122 participates in a covalent cross-link: Glycyl lysine isopeptide (Lys-Gly) (interchain with G-Cter in SUMO2). A disordered region spans residues 125 to 148; the sequence is NDLSSDAPGVPRIEEEKSEEETSA. A Phosphoserine modification is found at Ser-128. Phosphoserine; by HIPK2 is present on Ser-257. The region spanning 269 to 327 is the bZIP domain; sequence ARKREVRLMKNREAARECRRKKKEYVKCLENRVAVLENQNKTLIEELKALKDLYCHKSD. The basic motif stretch occupies residues 270–295; the sequence is RKREVRLMKNREAARECRRKKKEYVK. Glycyl lysine isopeptide (Lys-Gly) (interchain with G-Cter in SUMO1) cross-links involve residues Lys-271 and Lys-290. The tract at residues 297–318 is leucine-zipper; the sequence is LENRVAVLENQNKTLIEELKAL.

Belongs to the bZIP family. Interacts with PPRC1. Binds DNA as a dimer. This dimer is stabilized by magnesium ions. Interacts, through the bZIP domain, with the coactivators CRTC1/TORC1, CRTC2/TORC2 and CRTC3/TORC3. When phosphorylated on Ser-119, binds CREBBP. Interacts with CREBL2; regulates CREB1 phosphorylation, stability and transcriptional activity. Interacts (phosphorylated form) with TOX3. Interacts with ARRB1. Binds to HIPK2. Interacts with SGK1. Interacts with TSSK4; this interaction facilitates phosphorylation on Ser-119. Forms a complex with KMT2A and CREBBP. Interacts with TOX4; CREB1 is required for full induction of TOX4-dependent activity and the interaction is increased by cAMP and inhibited by insulin. As to quaternary structure, (Microbial infection) Interacts with hepatitis B virus/HBV protein X. In terms of assembly, (Microbial infection) Interacts with HTLV-1 protein Tax. In terms of processing, stimulated by phosphorylation. Phosphorylation of both Ser-119 and Ser-128 in the SCN regulates the activity of CREB and participates in circadian rhythm generation. Phosphorylation of Ser-119 allows CREBBP binding. In liver, phosphorylation is induced by fasting or glucagon in a circadian fashion. CREBL2 positively regulates phosphorylation at Ser-119 thereby stimulating CREB1 transcriptional activity. Phosphorylated upon calcium influx by CaMK4 and CaMK2 on Ser-119. CaMK4 is much more potent than CaMK2 in activating CREB. Phosphorylated by CaMK2 on Ser-128. Phosphorylation of Ser-128 blocks CREB-mediated transcription even when Ser-119 is phosphorylated. Phosphorylated by CaMK1. Phosphorylation of Ser-257 by HIPK2 in response to genotoxic stress promotes CREB1 activity, facilitating the recruitment of the coactivator CBP. Phosphorylated at Ser-119 by RPS6KA3, RPS6KA4 and RPS6KA5 in response to mitogenic or stress stimuli. Phosphorylated by TSSK4 on Ser-119. Post-translationally, sumoylated with SUMO1. Sumoylation on Lys-290, but not on Lys-271, is required for nuclear localization of this protein. Sumoylation is enhanced under hypoxia, promoting nuclear localization and stabilization.

The protein resides in the nucleus. In terms of biological role, phosphorylation-dependent transcription factor that stimulates transcription upon binding to the DNA cAMP response element (CRE), a sequence present in many viral and cellular promoters. Transcription activation is enhanced by the TORC coactivators which act independently of Ser-119 phosphorylation. Involved in different cellular processes including the synchronization of circadian rhythmicity and the differentiation of adipose cells. Regulates the expression of apoptotic and inflammatory response factors in cardiomyocytes in response to ERFE-mediated activation of AKT signaling. This is Cyclic AMP-responsive element-binding protein 1 (CREB1) from Homo sapiens (Human).